Here is a 91-residue protein sequence, read N- to C-terminus: Probable Fe(2+)-trafficking protein (91 aa).

Belongs to the Fe(2+)-trafficking protein family.

Could be a mediator in iron transactions between iron acquisition and iron-requiring processes, such as synthesis and/or repair of Fe-S clusters in biosynthetic enzymes. The protein is Probable Fe(2+)-trafficking protein of Burkholderia multivorans (strain ATCC 17616 / 249).